A 224-amino-acid polypeptide reads, in one-letter code: Cytidylate kinase (224 aa).

Position 9-17 (9-17 (GPSGSGKGT)) interacts with ATP.

This sequence belongs to the cytidylate kinase family. Type 1 subfamily.

The protein resides in the cytoplasm. The catalysed reaction is CMP + ATP = CDP + ADP. The enzyme catalyses dCMP + ATP = dCDP + ADP. This is Cytidylate kinase from Saccharophagus degradans (strain 2-40 / ATCC 43961 / DSM 17024).